The following is a 523-amino-acid chain: 3-hydroxybenzoate--CoA/4-hydroxybenzoate--CoA ligase (523 aa).

Belongs to the ATP-dependent AMP-binding enzyme family. Benzoate-CoA ligase subfamily.

The enzyme catalyses 4-hydroxybenzoate + ATP + CoA = 4-hydroxybenzoyl-CoA + AMP + diphosphate. It catalyses the reaction 3-hydroxybenzoate + ATP + CoA = 3-hydroxybenzoyl-CoA + AMP + diphosphate. Its function is as follows. Catalyzes the ligation of 3-hydroxybenzoate or 4-hydroxybenzoate and CoA at the expense of ATP. The enzyme shows low activity towards benzoate, 4-aminobenzoate, 3-aminobenzoate, 3-fluorobenzoate, 4-fluorobenzoate, 3-chlorobenzoate, and 4-chlorobenzoate. There is no activity with 3,4-dihydroxybenzoate, 2,3-dihydroxybenzoate, and 2-hydroxybenzoate as substrates. The polypeptide is 3-hydroxybenzoate--CoA/4-hydroxybenzoate--CoA ligase (hcl) (Thauera aromatica).